A 440-amino-acid polypeptide reads, in one-letter code: ATP-dependent protease ATPase subunit HslU (440 aa).

Residues Val18, Gly60–Glu65, Asp254, Glu319, and Arg391 each bind ATP.

The protein belongs to the ClpX chaperone family. HslU subfamily. A double ring-shaped homohexamer of HslV is capped on each side by a ring-shaped HslU homohexamer. The assembly of the HslU/HslV complex is dependent on binding of ATP.

It is found in the cytoplasm. In terms of biological role, ATPase subunit of a proteasome-like degradation complex; this subunit has chaperone activity. The binding of ATP and its subsequent hydrolysis by HslU are essential for unfolding of protein substrates subsequently hydrolyzed by HslV. HslU recognizes the N-terminal part of its protein substrates and unfolds these before they are guided to HslV for hydrolysis. In Cellvibrio japonicus (strain Ueda107) (Pseudomonas fluorescens subsp. cellulosa), this protein is ATP-dependent protease ATPase subunit HslU.